Reading from the N-terminus, the 462-residue chain is Probable threonine/serine transporter YbxG (462 aa).

Transmembrane regions (helical) follow at residues 17-37 (MIALGGTIGVGLFMGSASTIS), 38-58 (WTGPSVLLAYAICGIFIFFIM), 89-109 (ITAWSNWFQWIIVGMSEIIAV), 121-141 (PAWIPGIVAMVILGAANLISV), 154-174 (IKIVTIILMIIAGIGIIFFGF), 190-210 (GGFFAGGFSGFFFALSLVIAA), 238-258 (IIWRILIFYIGAIFVIVTVYP), 276-296 (IGITAAAGIINFVVITAAMSG), 331-351 (LYGTIAVLIGLAVGVVLNYIA), 355-375 (IFVYVYSASVLPGMIPWFIIL), 398-418 (FAPFTNYLTIAFLLMVLVGMW), and 427-447 (LIVGVIFLALVVISYYVFGIG).

Belongs to the amino acid-polyamine-organocation (APC) superfamily.

The protein localises to the cell membrane. Its function is as follows. Probable threonine transporter. Is also active as a minor serine permease. This is Probable threonine/serine transporter YbxG (ybxG) from Bacillus subtilis (strain 168).